A 122-amino-acid polypeptide reads, in one-letter code: Large ribosomal subunit protein uL14c (122 aa).

Belongs to the universal ribosomal protein uL14 family. Part of the 50S ribosomal subunit.

The protein resides in the plastid. It localises to the chloroplast. Functionally, binds to 23S rRNA. The chain is Large ribosomal subunit protein uL14c from Psilotum nudum (Whisk fern).